Here is a 150-residue protein sequence, read N- to C-terminus: D-aminoacyl-tRNA deacylase (150 aa).

The Gly-cisPro motif, important for rejection of L-amino acids signature appears at 138–139 (GP).

This sequence belongs to the DTD family. As to quaternary structure, homodimer.

It localises to the cytoplasm. The enzyme catalyses glycyl-tRNA(Ala) + H2O = tRNA(Ala) + glycine + H(+). It catalyses the reaction a D-aminoacyl-tRNA + H2O = a tRNA + a D-alpha-amino acid + H(+). Functionally, an aminoacyl-tRNA editing enzyme that deacylates mischarged D-aminoacyl-tRNAs. Also deacylates mischarged glycyl-tRNA(Ala), protecting cells against glycine mischarging by AlaRS. Acts via tRNA-based rather than protein-based catalysis; rejects L-amino acids rather than detecting D-amino acids in the active site. By recycling D-aminoacyl-tRNA to D-amino acids and free tRNA molecules, this enzyme counteracts the toxicity associated with the formation of D-aminoacyl-tRNA entities in vivo and helps enforce protein L-homochirality. This chain is D-aminoacyl-tRNA deacylase, found in Petrotoga mobilis (strain DSM 10674 / SJ95).